Consider the following 200-residue polypeptide: Signal peptidase complex catalytic subunit SEC11 (200 aa).

Topologically, residues 1 to 14 (MFAELAPYLSNPRQ) are cytoplasmic. The chain crosses the membrane as a helical; Signal-anchor for type II membrane protein span at residues 15–33 (TLAQILNFALVLSTAFMGW). The Lumenal portion of the chain corresponds to 34–200 (KALSVYTNSP…MGVMVMLQRE (167 aa)). Catalysis depends on charge relay system residues S53 and H92. The segment at 101–129 (GDGGNKSQRRLEREADKPSGPGLSSPLSH) is disordered. N105 is a glycosylation site (N-linked (GlcNAc...) asparagine). A compositionally biased stretch (low complexity) spans 118–128 (PSGPGLSSPLS). D142 (charge relay system) is an active-site residue. Positions 186–197 (VLLGIMGVMVML) are C-terminal short (CTS) helix.

Belongs to the peptidase S26B family. As to quaternary structure, component of the signal peptidase complex (SPC) composed of a catalytic subunit SEC11 and three accessory subunits SPC1, SPC2 and SPC3. The complex induces a local thinning of the ER membrane which is used to measure the length of the signal peptide (SP) h-region of protein substrates. This ensures the selectivity of the complex towards h-regions shorter than 18-20 amino acids. SPC associates with the translocon complex.

It localises to the endoplasmic reticulum membrane. It carries out the reaction Cleavage of hydrophobic, N-terminal signal or leader sequences from secreted and periplasmic proteins.. In terms of biological role, catalytic component of the signal peptidase complex (SPC) which catalyzes the cleavage of N-terminal signal sequences from nascent proteins as they are translocated into the lumen of the endoplasmic reticulum. Specifically cleaves N-terminal signal peptides that contain a hydrophobic alpha-helix (h-region) shorter than 18-20 amino acids. This is Signal peptidase complex catalytic subunit SEC11 (SEC11) from Arthroderma otae (strain ATCC MYA-4605 / CBS 113480) (Microsporum canis).